Reading from the N-terminus, the 427-residue chain is Light-independent protochlorophyllide reductase subunit N (427 aa).

[4Fe-4S] cluster contacts are provided by Cys29, Cys54, and Cys115.

The protein belongs to the BchN/ChlN family. In terms of assembly, protochlorophyllide reductase is composed of three subunits; BchL, BchN and BchB. Forms a heterotetramer of two BchB and two BchN subunits. [4Fe-4S] cluster serves as cofactor.

It catalyses the reaction chlorophyllide a + oxidized 2[4Fe-4S]-[ferredoxin] + 2 ADP + 2 phosphate = protochlorophyllide a + reduced 2[4Fe-4S]-[ferredoxin] + 2 ATP + 2 H2O. It participates in porphyrin-containing compound metabolism; bacteriochlorophyll biosynthesis (light-independent). Functionally, component of the dark-operative protochlorophyllide reductase (DPOR) that uses Mg-ATP and reduced ferredoxin to reduce ring D of protochlorophyllide (Pchlide) to form chlorophyllide a (Chlide). This reaction is light-independent. The NB-protein (BchN-BchB) is the catalytic component of the complex. The polypeptide is Light-independent protochlorophyllide reductase subunit N (Bradyrhizobium sp. (strain ORS 278)).